A 63-amino-acid polypeptide reads, in one-letter code: uncharacterized protein (63 aa).

Residues 35-63 (PKPDSLISEHPTAQEAMDAKKRYEDPDKE) form a disordered region. Basic and acidic residues predominate over residues 51-63 (MDAKKRYEDPDKE).

This is an uncharacterized protein from Escherichia coli O157:H7.